Here is a 151-residue protein sequence, read N- to C-terminus: Histone H2B.1 (151 aa).

2 stretches are compositionally biased toward basic and acidic residues: residues 1 to 28 (MAPKAEKKPAAKKPAEEEPATEKVEKAP) and 36 to 51 (EKRLPAGKSKEGGEGK). The segment at 1–58 (MAPKAEKKPAAKKPAEEEPATEKVEKAPAGKKPKAEKRLPAGKSKEGGEGKKGKKKAK) is disordered. Residues K7 and K37 each carry the N6-acetyllysine modification. Residue K147 forms a Glycyl lysine isopeptide (Lys-Gly) (interchain with G-Cter in ubiquitin) linkage.

It belongs to the histone H2B family. In terms of assembly, the nucleosome is a histone octamer containing two molecules each of H2A, H2B, H3 and H4 assembled in one H3-H4 heterotetramer and two H2A-H2B heterodimers. The octamer wraps approximately 147 bp of DNA. Post-translationally, can be acetylated to form H2BK6ac and H2BK33ac. Monoubiquitinated to form H2BK143ub1; may give a specific tag for epigenetic transcriptional activation.

The protein localises to the nucleus. The protein resides in the chromosome. In terms of biological role, core component of nucleosome. Nucleosomes wrap and compact DNA into chromatin, limiting DNA accessibility to the cellular machineries which require DNA as a template. Histones thereby play a central role in transcription regulation, DNA repair, DNA replication and chromosomal stability. DNA accessibility is regulated via a complex set of post-translational modifications of histones, also called histone code, and nucleosome remodeling. This chain is Histone H2B.1, found in Zea mays (Maize).